The following is a 143-amino-acid chain: Large ribosomal subunit protein uL15 (143 aa).

Basic residues predominate over residues Met1–Gly13. Positions Met1–Gly39 are disordered. The segment covering Gly29–Gly38 has biased composition (gly residues).

Belongs to the universal ribosomal protein uL15 family. In terms of assembly, part of the 50S ribosomal subunit.

In terms of biological role, binds to the 23S rRNA. In Methanocaldococcus jannaschii (strain ATCC 43067 / DSM 2661 / JAL-1 / JCM 10045 / NBRC 100440) (Methanococcus jannaschii), this protein is Large ribosomal subunit protein uL15.